The chain runs to 404 residues: MASSFPALQFKVVARCSTTRARVTDIQLPHGLVESPVFMPVGTQASLKGVLPEQLDALGCKIMLNNTYHLGLKPGQEVLDTVGGAHRFQSWNKNILTDSGGFQMVSLLKLATITEDGVTFLSPRDGTPMLLTPEHSISLQNSIGSDIMMQLDDVVHTLTESKRMEEAMYRSIRWLDRCIQAHKRPETQNLFCIIQGGLDKRLREICCREMVKRNTPGIAVGGLSGGEEKHAFCETVYTCTSILPDNKPRYLMGVGYAEDLVVCVALGMDMFDCVYPTRTARFGNALTRKGVINLRNQKFRNDIGPLEEGCSCPCCKTELEGGWGITRAYFNSLVSKETVGANLMTIHNVHFQLQLMRDMRESIIKDEFPSFVKNFFHEWNHGDKSNYPSWAVDALRMVNIDLLA.

Aspartate 98 acts as the Proton acceptor in catalysis. Residues aspartate 98 to phenylalanine 102, aspartate 152, glutamine 195, and glycine 222 contribute to the substrate site. The segment at glycine 253 to aspartate 259 is RNA binding. The Nucleophile role is filled by aspartate 272. The segment at threonine 277 to arginine 281 is RNA binding; important for wobble base 34 recognition. Positions 310, 312, 315, and 347 each coordinate Zn(2+).

It belongs to the queuine tRNA-ribosyltransferase family. Heterodimer of a catalytic subunit and an accessory subunit. Zn(2+) serves as cofactor.

The protein localises to the cytoplasm. The protein resides in the nucleus. The enzyme catalyses guanosine(34) in tRNA + queuine = queuosine(34) in tRNA + guanine. In terms of biological role, catalytic subunit of the queuine tRNA-ribosyltransferase (TGT) that catalyzes the base-exchange of a guanine (G) residue with queuine (Q) at position 34 (anticodon wobble position) in tRNAs with GU(N) anticodons (tRNA-Asp, -Asn, -His and -Tyr), resulting in the hypermodified nucleoside queuosine (7-(((4,5-cis-dihydroxy-2-cyclopenten-1-yl)amino)methyl)-7-deazaguanosine). Catalysis occurs through a double-displacement mechanism. The nucleophile active site attacks the C1' of nucleotide 34 to detach the guanine base from the RNA, forming a covalent enzyme-RNA intermediate. The proton acceptor active site deprotonates the incoming queuine, allowing a nucleophilic attack on the C1' of the ribose to form the product. The sequence is that of Queuine tRNA-ribosyltransferase catalytic subunit from Schizosaccharomyces pombe (strain 972 / ATCC 24843) (Fission yeast).